Here is a 260-residue protein sequence, read N- to C-terminus: Fructose import ATP-binding protein FrcA (260 aa).

An ABC transporter domain is found at 7–251; it reads LTARGLVKRY…DAVAFMTGAK (245 aa). ATP is bound at residue 39 to 46; the sequence is GDNGAGKS.

It belongs to the ABC transporter superfamily. The complex is composed of two ATP-binding proteins (FrcA), two transmembrane proteins (FrcC) and a solute-binding protein (FrcB).

Its subcellular location is the cell inner membrane. The catalysed reaction is D-fructose(out) + ATP + H2O = D-fructose(in) + ADP + phosphate + H(+). Its function is as follows. Part of the high-affinity ABC transporter complex FrcBCA involved in fructose uptake. Is also a high-affinity transporter for ribose and mannose. Responsible for energy coupling to the transport system. The chain is Fructose import ATP-binding protein FrcA from Rhizobium meliloti (Ensifer meliloti).